A 617-amino-acid polypeptide reads, in one-letter code: BTB/POZ domain-containing protein At3g08570 (617 aa).

In terms of domain architecture, BTB spans 36 to 106 (GDITIVVDGE…CYGINFEITI (71 aa)). An NPH3 domain is found at 210 to 490 (EWWIEDLSAL…VRVLYSEQLR (281 aa)). Tyrosine 431 is subject to Phosphotyrosine. Disordered stretches follow at residues 505–525 (LSSQ…RDTY) and 585–617 (GGGP…ESMF). The span at 602–617 (SRLERKTVRSRPESMF) shows a compositional bias: basic and acidic residues.

It belongs to the NPH3 family.

The protein operates within protein modification; protein ubiquitination. Functionally, may act as a substrate-specific adapter of an E3 ubiquitin-protein ligase complex (CUL3-RBX1-BTB) which mediates the ubiquitination and subsequent proteasomal degradation of target proteins. This Arabidopsis thaliana (Mouse-ear cress) protein is BTB/POZ domain-containing protein At3g08570.